Reading from the N-terminus, the 162-residue chain is uncharacterized protein (162 aa).

The chain crosses the membrane as a helical span at residues 7-27; it reads LGGVMLFAIVSLMVCGCMVVF.

It localises to the membrane. This is an uncharacterized protein from Methanocaldococcus jannaschii (strain ATCC 43067 / DSM 2661 / JAL-1 / JCM 10045 / NBRC 100440) (Methanococcus jannaschii).